We begin with the raw amino-acid sequence, 720 residues long: Polyribonucleotide nucleotidyltransferase (720 aa).

Mg(2+)-binding residues include aspartate 484 and aspartate 490. Positions 551–610 (PRMYKINIDPSKIGSVIGSGGKTIRSIIEQTNTTVDIENDGTVVIGATDEASAKKAIKII) constitute a KH domain. In terms of domain architecture, S1 motif spans 620–688 (GSIYTGKVTR…NQGRVNLSHR (69 aa)). The disordered stretch occupies residues 697 to 720 (PISRNRDSQPRRPGPFRPSDRSNS).

Belongs to the polyribonucleotide nucleotidyltransferase family. Mg(2+) serves as cofactor.

The protein localises to the cytoplasm. It catalyses the reaction RNA(n+1) + phosphate = RNA(n) + a ribonucleoside 5'-diphosphate. Its function is as follows. Involved in mRNA degradation. Catalyzes the phosphorolysis of single-stranded polyribonucleotides processively in the 3'- to 5'-direction. In Dehalococcoides mccartyi (strain CBDB1), this protein is Polyribonucleotide nucleotidyltransferase.